Here is a 223-residue protein sequence, read N- to C-terminus: Ubiquitin-conjugating enzyme E2 S (223 aa).

The residue at position 1 (Met-1) is an N-acetylmethionine. In terms of domain architecture, UBC core spans His-11–Gly-157. Residue Cys-95 is the Glycyl thioester intermediate of the active site. Residues His-155 to Leu-223 form a disordered region. The segment covering Gly-169–Pro-195 has biased composition (low complexity). At Ser-174 the chain carries Phosphoserine. Residues Ala-209 to Leu-223 are compositionally biased toward basic residues.

It belongs to the ubiquitin-conjugating enzyme family. In terms of assembly, component of the APC/C complex, composed of at least 14 distinct subunits that assemble into a complex of at least 19 chains with a combined molecular mass of around 1.2 MDa. Within this complex, directly interacts with ANAPC2 and ANAPC4. Interacts with CDC20, FZR1/CDH1 and VHL. Post-translationally, autoubiquitinated by the APC/C complex during G1, leading to its degradation by the proteasome.

It catalyses the reaction S-ubiquitinyl-[E1 ubiquitin-activating enzyme]-L-cysteine + [E2 ubiquitin-conjugating enzyme]-L-cysteine = [E1 ubiquitin-activating enzyme]-L-cysteine + S-ubiquitinyl-[E2 ubiquitin-conjugating enzyme]-L-cysteine.. It functions in the pathway protein modification; protein ubiquitination. Accepts ubiquitin from the E1 complex and catalyzes its covalent attachment to other proteins. Catalyzes 'Lys-11'-linked polyubiquitination. Acts as an essential factor of the anaphase promoting complex/cyclosome (APC/C), a cell cycle-regulated ubiquitin ligase that controls progression through mitosis. Acts by specifically elongating 'Lys-11'-linked polyubiquitin chains initiated by the E2 enzyme UBE2C/UBCH10 on APC/C substrates, enhancing the degradation of APC/C substrates by the proteasome and promoting mitotic exit. Also acts by elongating ubiquitin chains initiated by the E2 enzyme UBE2D1/UBCH5 in vitro; it is however unclear whether UBE2D1/UBCH5 acts as an E2 enzyme for the APC/C in vivo. Also involved in ubiquitination and subsequent degradation of VHL, resulting in an accumulation of HIF1A. In vitro able to promote polyubiquitination using all 7 ubiquitin Lys residues, except 'Lys-48'-linked polyubiquitination. This is Ubiquitin-conjugating enzyme E2 S (UBE2S) from Bos taurus (Bovine).